We begin with the raw amino-acid sequence, 341 residues long: Methionine import ATP-binding protein MetN (341 aa).

Residues 6–247 (IEIKKLSKNF…PQHQATRHLL (242 aa)) enclose the ABC transporter domain. 44-51 (GMSGAGKS) contacts ATP.

Belongs to the ABC transporter superfamily. Methionine importer (TC 3.A.1.24) family. In terms of assembly, the complex is composed of two ATP-binding proteins (MetN), two transmembrane proteins (MetI) and a solute-binding protein (MetQ).

The protein resides in the cell inner membrane. The enzyme catalyses L-methionine(out) + ATP + H2O = L-methionine(in) + ADP + phosphate + H(+). It carries out the reaction D-methionine(out) + ATP + H2O = D-methionine(in) + ADP + phosphate + H(+). Functionally, part of the ABC transporter complex MetNIQ involved in methionine import. Responsible for energy coupling to the transport system. This chain is Methionine import ATP-binding protein MetN, found in Protochlamydia amoebophila (strain UWE25).